The following is a 111-amino-acid chain: Phosphoribosyl-ATP pyrophosphatase (111 aa).

It belongs to the PRA-PH family.

It is found in the cytoplasm. It carries out the reaction 1-(5-phospho-beta-D-ribosyl)-ATP + H2O = 1-(5-phospho-beta-D-ribosyl)-5'-AMP + diphosphate + H(+). Its pathway is amino-acid biosynthesis; L-histidine biosynthesis; L-histidine from 5-phospho-alpha-D-ribose 1-diphosphate: step 2/9. This is Phosphoribosyl-ATP pyrophosphatase from Alcanivorax borkumensis (strain ATCC 700651 / DSM 11573 / NCIMB 13689 / SK2).